Here is a 411-residue protein sequence, read N- to C-terminus: NADH-quinone oxidoreductase subunit H (411 aa).

Helical transmembrane passes span 18–38 (LAKSLGIFAFLLLTVLAAILI), 84–104 (WIYLAAPIISVIPAFMAFAVI), 124–144 (LPVAVLYILAVTSIGVYGIVL), 165–185 (VISYEIAMALSFAAVFIYAGT), 198–218 (TWYIVLLLPSFLVYVTAMVGE), 260–280 (VSALATTLFLGGWHAPWPISI), 288–308 (WWPLLWFTVKVWLFLFFFMWL), 321–341 (MALGWKILIPVSLGWIMIVAI), and 352–372 (APATAAIGLAVAAVILLALLG).

It belongs to the complex I subunit 1 family. As to quaternary structure, NDH-1 is composed of 14 different subunits. Subunits NuoA, H, J, K, L, M, N constitute the membrane sector of the complex.

It is found in the cell membrane. It carries out the reaction a quinone + NADH + 5 H(+)(in) = a quinol + NAD(+) + 4 H(+)(out). In terms of biological role, NDH-1 shuttles electrons from NADH, via FMN and iron-sulfur (Fe-S) centers, to quinones in the respiratory chain. The immediate electron acceptor for the enzyme in this species is believed to be menaquinone. Couples the redox reaction to proton translocation (for every two electrons transferred, four hydrogen ions are translocated across the cytoplasmic membrane), and thus conserves the redox energy in a proton gradient. This subunit may bind ubiquinone. This Mycolicibacterium vanbaalenii (strain DSM 7251 / JCM 13017 / BCRC 16820 / KCTC 9966 / NRRL B-24157 / PYR-1) (Mycobacterium vanbaalenii) protein is NADH-quinone oxidoreductase subunit H.